The following is a 1388-amino-acid chain: Rho-associated protein kinase 2 (1388 aa).

A disordered region spans residues 1–24 (MSRPPPTGKMPGAPEAVSGDGAGA). The Protein kinase domain maps to 92–354 (YDVVKVIGRG…VEEIKQHPFF (263 aa)). ATP-binding positions include 98–106 (IGRGAFGEV) and Lys121. Asp214 functions as the Proton acceptor in the catalytic mechanism. Positions 357–425 (DQWNWDNIRE…YRENLLLSDS (69 aa)) constitute an AGC-kinase C-terminal domain. The interaction with PPP1R12A stretch occupies residues 363-784 (NIRETAAPVV…INELLKQKDV (422 aa)). Residues 373–420 (PELSSDIDSSNFDDIEDDKGDVETFPIPKAFVGNQLPFIGFTYYRENL) are interaction with NPM1. The residue at position 414 (Thr414) is a Phosphothreonine; by ROCK2. Coiled-coil stretches lie at residues 439-1025 (NEES…KQLL) and 1053-1131 (DTDV…IGLD). In terms of domain architecture, REM-1 spans 497–573 (TLRQLEREKA…LDETNALLRT (77 aa)). A compositionally biased stretch (basic and acidic residues) spans 512 to 530 (NAEYQRKADHEADKKRNLE). Residues 512–532 (NAEYQRKADHEADKKRNLEND) form a disordered region. Tyr722 carries the post-translational modification Phosphotyrosine; by SRC. One can recognise a RhoBD domain in the interval 979-1047 (TSDVANLANE…LAEIMNRKEP (69 aa)). Residues 979-1047 (TSDVANLANE…LAEIMNRKEP (69 aa)) form an RHOA binding region. The residue at position 1137 (Ser1137) is a Phosphoserine. One can recognise a PH domain in the interval 1150–1349 (ESRLEGWLSL…WVSRLVKKIP (200 aa)). Residue Thr1212 is modified to Phosphothreonine. The Phorbol-ester/DAG-type zinc-finger motif lies at 1260-1315 (GHEFIPTLYHFPTNCEACMKPLWHMFKPPPALECRRCHIKCHKDHMDKKEEIIAPC). Residues 1345 to 1388 (VKKIPKKPPAPDPFARSSPRTSMKIQQNQSIRRPSRQLAPNKPS) form a disordered region. Residues Ser1362 and Ser1374 each carry the phosphoserine modification. Residues 1362-1376 (SPRTSMKIQQNQSIR) are compositionally biased toward polar residues.

It belongs to the protein kinase superfamily. AGC Ser/Thr protein kinase family. As to quaternary structure, homodimer. Interacts with IRS1. Interacts with RAF1. Interacts with RHOA (activated by GTP). Interacts with RHOB and RHOC. Interacts with PPP1R12A. Interacts with EP300. Interacts with CHORDC1. Interacts with BRCA2. Interacts with NPM1; this interaction enhances ROCK2 activity. Interacts with SORL1. Interacts with PJVK. The cofactor is Mg(2+). Autophosphorylated. Phosphorylation at Tyr-722 reduces its binding to RHOA and is crucial for focal adhesion dynamics. Dephosphorylation by PTPN11 stimulates its RHOA binding activity. In terms of processing, cleaved by granzyme B during apoptosis. This leads to constitutive activation of the kinase and membrane blebbing. Highly expressed in whole brain and in cerebellum, and at lower levels in heart and lung. Detected at low levels in skeletal muscle, spleen, liver, kidney and pancreas.

The protein localises to the cytoplasm. Its subcellular location is the cell membrane. It is found in the nucleus. It localises to the cytoskeleton. The protein resides in the microtubule organizing center. The protein localises to the centrosome. The catalysed reaction is L-seryl-[protein] + ATP = O-phospho-L-seryl-[protein] + ADP + H(+). It carries out the reaction L-threonyl-[protein] + ATP = O-phospho-L-threonyl-[protein] + ADP + H(+). Activated by RHOA binding. Inhibited by Y-27632. In terms of biological role, protein kinase which is a key regulator of actin cytoskeleton and cell polarity. Involved in regulation of smooth muscle contraction, actin cytoskeleton organization, stress fiber and focal adhesion formation, neurite retraction, cell adhesion and motility via phosphorylation of ADD1, BRCA2, CNN1, EZR, DPYSL2, EP300, MSN, MYL9/MLC2, NPM1, RDX, PPP1R12A and VIM. Phosphorylates SORL1 and IRF4. Acts as a negative regulator of VEGF-induced angiogenic endothelial cell activation. Positively regulates the activation of p42/MAPK1-p44/MAPK3 and of p90RSK/RPS6KA1 during myogenic differentiation. Plays an important role in the timely initiation of centrosome duplication. Inhibits keratinocyte terminal differentiation. May regulate closure of the eyelids and ventral body wall through organization of actomyosin bundles. Plays a critical role in the regulation of spine and synaptic properties in the hippocampus. Plays an important role in generating the circadian rhythm of the aortic myofilament Ca(2+) sensitivity and vascular contractility by modulating the myosin light chain phosphorylation. The polypeptide is Rho-associated protein kinase 2 (ROCK2) (Bos taurus (Bovine)).